Reading from the N-terminus, the 507-residue chain is Maturase K (507 aa).

It belongs to the intron maturase 2 family. MatK subfamily.

The protein localises to the plastid. It is found in the chloroplast. Usually encoded in the trnK tRNA gene intron. Probably assists in splicing its own and other chloroplast group II introns. The polypeptide is Maturase K (Kalmia procumbens (Alpine azalea)).